A 352-amino-acid chain; its full sequence is Probable dual-specificity RNA methyltransferase RlmN (352 aa).

Glu99 serves as the catalytic Proton acceptor. The 221-residue stretch at 105–325 folds into the Radical SAM core domain; sequence EGDRATLCIS…ESHGYTCTIR (221 aa). Residues Cys112 and Cys336 are joined by a disulfide bond. Cys119, Cys123, and Cys126 together coordinate [4Fe-4S] cluster. S-adenosyl-L-methionine contacts are provided by residues 164 to 165, Ser196, 217 to 219, and His293; these read GE and SLH. Cys336 acts as the S-methylcysteine intermediate in catalysis.

Belongs to the radical SAM superfamily. RlmN family. Requires [4Fe-4S] cluster as cofactor.

The protein localises to the cytoplasm. It carries out the reaction adenosine(2503) in 23S rRNA + 2 reduced [2Fe-2S]-[ferredoxin] + 2 S-adenosyl-L-methionine = 2-methyladenosine(2503) in 23S rRNA + 5'-deoxyadenosine + L-methionine + 2 oxidized [2Fe-2S]-[ferredoxin] + S-adenosyl-L-homocysteine. The enzyme catalyses adenosine(37) in tRNA + 2 reduced [2Fe-2S]-[ferredoxin] + 2 S-adenosyl-L-methionine = 2-methyladenosine(37) in tRNA + 5'-deoxyadenosine + L-methionine + 2 oxidized [2Fe-2S]-[ferredoxin] + S-adenosyl-L-homocysteine. In terms of biological role, specifically methylates position 2 of adenine 2503 in 23S rRNA and position 2 of adenine 37 in tRNAs. In Porphyromonas gingivalis (strain ATCC 33277 / DSM 20709 / CIP 103683 / JCM 12257 / NCTC 11834 / 2561), this protein is Probable dual-specificity RNA methyltransferase RlmN.